The following is a 122-amino-acid chain: Large ribosomal subunit protein uL14 (122 aa).

The protein belongs to the universal ribosomal protein uL14 family. Part of the 50S ribosomal subunit. Forms a cluster with proteins L3 and L19. In the 70S ribosome, L14 and L19 interact and together make contacts with the 16S rRNA in bridges B5 and B8.

Binds to 23S rRNA. Forms part of two intersubunit bridges in the 70S ribosome. This chain is Large ribosomal subunit protein uL14, found in Gluconobacter oxydans (strain 621H) (Gluconobacter suboxydans).